Reading from the N-terminus, the 1178-residue chain is MLKFQTVRGGLRLLGVRRSSTAPVASPNVRRLEYKPIKKVMVANRGEIAIRVFRACTELGIRTVAVYSEQDTGQMHRQKADEAYLIGRGLAPVQAYLHIPDIIKVAKENGVDAVHPGYGFLSERADFAQACQDAGVRFIGPSPEVVRKMGDKVEARAIAIAAGVPVVPGTNSPINSLHEAHEFSNTYGFPIIFKAAYGGGGRGMRVVHSYEELEENYTRAYSEALAAFGNGALFVEKFIEKPRHIEVQILGDQYGNILHLYERDCSIQRRHQKVVEIAPATHLDPQLRSRLTSDSVKLAKQVGYENAGTVEFLVDKHGKHYFIEVNSRLQVEHTVTEEITDVDLVHAQIHVSEGRSLPDLGLRQENIRINGCAIQCRVTTEDPARSFQPDTGRIEVFRSGEGMGIRLDNASAFQGAVISPHYDSLLVKVIAHGKDHPTAATKMSRALAEFRVRGVKTNIPFLQNVLNNQQFLAGIVDTQFIDENPELFQLRPAQNRAQKLLHYLGHVMVNGPTTPIPVKVSPSPVDPIVPVVPIGPPPAGFRDILLREGPEGFARAVRNHQGLLLMDTTFRDAHQSLLATRVRTHDLKKIAPYVAHNFNNLFSIENWGGATFDVAMRFLYECPWRRLQELRELIPNIPFQMLLRGANAVGYTNYPDNVVFKFCEVAKENGMDVFRIFDSLNYLPNMLLGMEAAGSAGGVVEAAISYTGDVADPSRTKYSLEYYMGLAEELVRAGTHILCIKDMAGLLKPAACTMLVSSLRDRFPDLPLHIHTHDTSGSGVAAMLACAQAGADVVDVAVDSMSGMTSQPSMGALVACTKGTPLDTEVPLERVFDYSEYWEGARGLYAAFDCTATMKSGNSDVYENEIPGGQYTNLHFQAHSMGLGSKFKEVKKAYVEANQMLGDLIKVTPSSKIVGDLAQFMVQNGLSRAEAEAQAEELSFPRSVVEFLQGYIGIPHGGFPEPFRSKVLKDLPRIEGRPGASLPPLNLKELEKDLIDRHGEEVTPEDVLSAAMYPDVFAQFKDFTATFGPLDSLNTRLFLQGPKIAEEFEVELERGKTLHIKALAVSDLNRAGQRQVFFELNGQLRSILVKDTQAMKEMHFHPKALKDVKGQIGAPMPGKVIDVKVAAGAKVVKGQPLCVLSAMKMETVVTSPMEGTIRKVHVTKDMTLEGDDLILEIE.

Residues 1 to 20 constitute a mitochondrion transit peptide; it reads MLKFQTVRGGLRLLGVRRSS. An N6-acetyllysine mark is found at Lys-35 and Lys-39. Residues 36–486 enclose the Biotin carboxylation domain; that stretch reads PIKKVMVANR…DTQFIDENPE (451 aa). Residue Lys-79 is modified to N6-acetyllysine; alternate. Lys-79 carries the N6-succinyllysine; alternate modification. N6-acetyllysine is present on residues Lys-148 and Lys-152. Residues Lys-152 and Glu-236 each coordinate ATP. An ATP-grasp domain is found at 156 to 353; that stretch reads RAIAIAAGVP…LVHAQIHVSE (198 aa). An N6-acetyllysine modification is found at Lys-241. His-271 contributes to the ATP binding site. 3 positions are modified to N6-acetyllysine: Lys-297, Lys-316, and Lys-319. Arg-328 is an active-site residue. Lys-434 carries the N6-acetyllysine modification. At Lys-442 the chain carries N6-succinyllysine. One can recognise a Pyruvate carboxyltransferase domain in the interval 563-832; it reads LLLMDTTFRD…DTEVPLERVF (270 aa). 571-575 serves as a coordination point for substrate; the sequence is RDAHQ. A Mn(2+)-binding site is contributed by Asp-572. Position 589 is an N6-acetyllysine (Lys-589). Residue Arg-644 participates in substrate binding. An N6-acetyllysine mark is found at Lys-661 and Lys-717. A Mn(2+)-binding site is contributed by Lys-741. Lys-741 carries the post-translational modification N6-carboxylysine. The residue at position 748 (Lys-748) is an N6-acetyllysine. Residues His-771 and His-773 each coordinate Mn(2+). The residue at position 892 (Lys-892) is an N6-acetyllysine. Thr-908 provides a ligand contact to substrate. Lys-969 carries the N6-acetyllysine modification. Lys-988 is subject to N6-acetyllysine; alternate. Lys-988 carries the N6-succinyllysine; alternate modification. Lys-992 is subject to N6-acetyllysine. Thr-1003 is modified (phosphothreonine). 3 positions are modified to N6-acetyllysine: Lys-1061, Lys-1090, and Lys-1124. Positions 1109-1178 constitute a Biotinyl-binding domain; it reads KGQIGAPMPG…EGDDLILEIE (70 aa). N6-biotinyllysine is present on Lys-1144.

In terms of assembly, homotetramer. Interacts (via the biotin carboxylation domain) with SIRT4. Biotin serves as cofactor. The cofactor is Mn(2+). Post-translationally, acetylation of Lys-748 might play a role in catalytic activity regulation.

It localises to the mitochondrion matrix. It catalyses the reaction hydrogencarbonate + pyruvate + ATP = oxaloacetate + ADP + phosphate + H(+). It participates in carbohydrate biosynthesis; gluconeogenesis. In terms of biological role, pyruvate carboxylase catalyzes a 2-step reaction, involving the ATP-dependent carboxylation of the covalently attached biotin in the first step and the transfer of the carboxyl group to pyruvate in the second. Catalyzes in a tissue specific manner, the initial reactions of glucose (liver, kidney) and lipid (adipose tissue, liver, brain) synthesis from pyruvate. This Rattus norvegicus (Rat) protein is Pyruvate carboxylase, mitochondrial (Pc).